A 570-amino-acid polypeptide reads, in one-letter code: Urease subunit alpha (570 aa).

The 440-residue stretch at 131-570 (GGMDSHIHFI…LPMAQRYFLF (440 aa)) folds into the Urease domain. Residues H136, H138, and K219 each contribute to the Ni(2+) site. K219 carries the post-translational modification N6-carboxylysine. Substrate is bound at residue H221. Ni(2+) contacts are provided by H248 and H274. The Proton donor role is filled by H322. Residue D362 coordinates Ni(2+).

It belongs to the metallo-dependent hydrolases superfamily. Urease alpha subunit family. In terms of assembly, heterotrimer of UreA (gamma), UreB (beta) and UreC (alpha) subunits. Three heterotrimers associate to form the active enzyme. It depends on Ni cation as a cofactor. Carboxylation allows a single lysine to coordinate two nickel ions.

It is found in the cytoplasm. It carries out the reaction urea + 2 H2O + H(+) = hydrogencarbonate + 2 NH4(+). The protein operates within nitrogen metabolism; urea degradation; CO(2) and NH(3) from urea (urease route): step 1/1. The protein is Urease subunit alpha of Rhizobium etli (strain ATCC 51251 / DSM 11541 / JCM 21823 / NBRC 15573 / CFN 42).